We begin with the raw amino-acid sequence, 361 residues long: 3-dehydroquinate synthase (361 aa).

NAD(+) is bound by residues 104–108 (GVIGD), 128–129 (TT), K141, K150, and 168–171 (FLRT). Positions 183, 246, and 263 each coordinate Zn(2+).

Belongs to the sugar phosphate cyclases superfamily. Dehydroquinate synthase family. Requires Co(2+) as cofactor. It depends on Zn(2+) as a cofactor. NAD(+) serves as cofactor.

It is found in the cytoplasm. The catalysed reaction is 7-phospho-2-dehydro-3-deoxy-D-arabino-heptonate = 3-dehydroquinate + phosphate. It participates in metabolic intermediate biosynthesis; chorismate biosynthesis; chorismate from D-erythrose 4-phosphate and phosphoenolpyruvate: step 2/7. Functionally, catalyzes the conversion of 3-deoxy-D-arabino-heptulosonate 7-phosphate (DAHP) to dehydroquinate (DHQ). This is 3-dehydroquinate synthase from Opitutus terrae (strain DSM 11246 / JCM 15787 / PB90-1).